Consider the following 432-residue polypeptide: RNA exonuclease 4 (432 aa).

The segment covering 42 to 54 (ARKKAKKKFRKSK) has biased composition (basic residues). Residues 42–177 (ARKKAKKKFR…AKKRTYSDIS (136 aa)) are disordered. The span at 121-137 (KASDKSKGDKQRTEKAK) shows a compositional bias: basic and acidic residues. Serine 123 carries the post-translational modification Phosphoserine. Lysine 127 is covalently cross-linked (Glycyl lysine isopeptide (Lys-Gly) (interchain with G-Cter in SUMO2)). In terms of domain architecture, Exonuclease spans 230 to 381 (KRLGQKKRTI…PSLKRLSEKI (152 aa)).

The protein belongs to the REXO4 family. In terms of assembly, can bind ESR1 and ESR2. This interaction is abrogated by estrogen and augmented by tamoxifen treatment.

The protein localises to the nucleus. It localises to the nucleolus. Functionally, may function as an exonuclease. The polypeptide is RNA exonuclease 4 (Rexo4) (Mus musculus (Mouse)).